Here is a 146-residue protein sequence, read N- to C-terminus: Cyanate hydratase (146 aa).

Catalysis depends on residues Arg87, Glu90, and Ser113.

It belongs to the cyanase family.

It carries out the reaction cyanate + hydrogencarbonate + 3 H(+) = NH4(+) + 2 CO2. In terms of biological role, catalyzes the reaction of cyanate with bicarbonate to produce ammonia and carbon dioxide. The sequence is that of Cyanate hydratase from Nostoc sp. (strain PCC 7120 / SAG 25.82 / UTEX 2576).